The primary structure comprises 830 residues: Periplasmic nitrate reductase (830 aa).

The segment at residues 1-30 is a signal peptide (tat-type signal); it reads MTTRREFIKRSAAVTAACTAGISLSGEASN. The 57-residue stretch at 40 to 96 folds into the 4Fe-4S Mo/W bis-MGD-type domain; sequence LKWSKAPCRFCGTGCSVNVAVKDNQVVATHGDIQSEVNRGLNCVKGYFLSKIMYGKD. Positions 47, 50, 54, and 82 each coordinate [4Fe-4S] cluster. Residues Lys84, Gln151, Asn176, Cys180, 213 to 220, 244 to 248, Met374, Gln378, Asn484, 510 to 511, Lys533, Asp560, and 720 to 729 each bind Mo-bis(molybdopterin guanine dinucleotide); these read WGSNMAEM, STFQH, SE, and TGRVLEHWHS. Trp796 is a binding site for substrate. Positions 804 and 821 each coordinate Mo-bis(molybdopterin guanine dinucleotide).

This sequence belongs to the prokaryotic molybdopterin-containing oxidoreductase family. NasA/NapA/NarB subfamily. In terms of assembly, component of the periplasmic nitrate reductase NapAB complex composed of NapA and NapB. The cofactor is [4Fe-4S] cluster. Mo-bis(molybdopterin guanine dinucleotide) is required as a cofactor. Post-translationally, predicted to be exported by the Tat system. The position of the signal peptide cleavage has not been experimentally proven.

It is found in the periplasm. The catalysed reaction is 2 Fe(II)-[cytochrome] + nitrate + 2 H(+) = 2 Fe(III)-[cytochrome] + nitrite + H2O. In terms of biological role, catalytic subunit of the periplasmic nitrate reductase complex NapAB. Receives electrons from NapB and catalyzes the reduction of nitrate to nitrite. This Hahella chejuensis (strain KCTC 2396) protein is Periplasmic nitrate reductase.